Consider the following 216-residue polypeptide: Imidazole glycerol phosphate synthase subunit HisH (216 aa).

The Glutamine amidotransferase type-1 domain occupies 2-216 (SIAIIDYGSG…LISNFLRWKP (215 aa)). The Nucleophile role is filled by Cys-88. Residues His-196 and Glu-198 contribute to the active site.

Heterodimer of HisH and HisF.

The protein resides in the cytoplasm. The catalysed reaction is 5-[(5-phospho-1-deoxy-D-ribulos-1-ylimino)methylamino]-1-(5-phospho-beta-D-ribosyl)imidazole-4-carboxamide + L-glutamine = D-erythro-1-(imidazol-4-yl)glycerol 3-phosphate + 5-amino-1-(5-phospho-beta-D-ribosyl)imidazole-4-carboxamide + L-glutamate + H(+). The enzyme catalyses L-glutamine + H2O = L-glutamate + NH4(+). The protein operates within amino-acid biosynthesis; L-histidine biosynthesis; L-histidine from 5-phospho-alpha-D-ribose 1-diphosphate: step 5/9. In terms of biological role, IGPS catalyzes the conversion of PRFAR and glutamine to IGP, AICAR and glutamate. The HisH subunit catalyzes the hydrolysis of glutamine to glutamate and ammonia as part of the synthesis of IGP and AICAR. The resulting ammonia molecule is channeled to the active site of HisF. This Bradyrhizobium diazoefficiens (strain JCM 10833 / BCRC 13528 / IAM 13628 / NBRC 14792 / USDA 110) protein is Imidazole glycerol phosphate synthase subunit HisH.